Here is a 170-residue protein sequence, read N- to C-terminus: VIP peptides (170 aa).

An N-terminal signal peptide occupies residues 1 to 20; the sequence is MDTRNKAQLLVLLTLLSVLF. Residues 21 to 79 constitute a propeptide that is removed on maturation; it reads SQTSAWPLYRAPSALRLGDRIPFEGANEPDQVSLKEDIDMLQNALAENDTPYYDVSRNA. Ser76 carries the phosphoserine modification. Position 107 is a methionine amide (Met107). Asn152 bears the Asparagine amide mark. The propeptide occupies 156 to 170; sequence SSEGESPDFPEELEK.

This sequence belongs to the glucagon family.

The protein resides in the secreted. Functionally, VIP is a neuropeptide involved in a diverse array of physiological processes through activating the PACAP subfamily of class B1 G protein-coupled receptors: VIP receptor 1 (VPR1) and VIP receptor 2 (VPR2). Abundantly expressed throughout the CNS and peripheral nervous systems where they primarily exert neuroprotective and immune modulatory roles. Also causes vasodilation, lowers arterial blood pressure, stimulates myocardial contractility, increases glycogenolysis and relaxes the smooth muscle of trachea, stomach and gall bladder. In terms of biological role, PHM-27 and PHV-42 are two bioactive forms from proteolysis of the same precursor protein, that cause vasodilation. PHM-27 is a potent agonist of the calcitonin receptor CALCR, with similar efficacy as calcitonin. The sequence is that of VIP peptides from Homo sapiens (Human).